Here is a 494-residue protein sequence, read N- to C-terminus: Lysine--tRNA ligase (494 aa).

Residues glutamate 399 and glutamate 406 each contribute to the Mg(2+) site.

Belongs to the class-II aminoacyl-tRNA synthetase family. Mg(2+) serves as cofactor.

The protein resides in the cytoplasm. It carries out the reaction tRNA(Lys) + L-lysine + ATP = L-lysyl-tRNA(Lys) + AMP + diphosphate. This chain is Lysine--tRNA ligase (lysS), found in Saccharolobus solfataricus (strain ATCC 35092 / DSM 1617 / JCM 11322 / P2) (Sulfolobus solfataricus).